A 478-amino-acid chain; its full sequence is UDP-N-acetylmuramate--L-alanine ligase (478 aa).

112 to 118 is a binding site for ATP; it reads GTHGKTT.

This sequence belongs to the MurCDEF family.

It is found in the cytoplasm. It carries out the reaction UDP-N-acetyl-alpha-D-muramate + L-alanine + ATP = UDP-N-acetyl-alpha-D-muramoyl-L-alanine + ADP + phosphate + H(+). The protein operates within cell wall biogenesis; peptidoglycan biosynthesis. Cell wall formation. The polypeptide is UDP-N-acetylmuramate--L-alanine ligase (Polaromonas naphthalenivorans (strain CJ2)).